Here is a 236-residue protein sequence, read N- to C-terminus: Proteasome subunit alpha (236 aa).

The protein belongs to the peptidase T1A family. In terms of assembly, the 20S proteasome core is composed of 14 alpha and 14 beta subunits that assemble into four stacked heptameric rings, resulting in a barrel-shaped structure. The two inner rings, each composed of seven catalytic beta subunits, are sandwiched by two outer rings, each composed of seven alpha subunits. The catalytic chamber with the active sites is on the inside of the barrel. Has a gated structure, the ends of the cylinder being occluded by the N-termini of the alpha-subunits. Is capped by the proteasome-associated ATPase, ARC.

It localises to the cytoplasm. The protein operates within protein degradation; proteasomal Pup-dependent pathway. The formation of the proteasomal ATPase ARC-20S proteasome complex, likely via the docking of the C-termini of ARC into the intersubunit pockets in the alpha-rings, may trigger opening of the gate for substrate entry. Interconversion between the open-gate and close-gate conformations leads to a dynamic regulation of the 20S proteasome proteolysis activity. Its function is as follows. Component of the proteasome core, a large protease complex with broad specificity involved in protein degradation. In Pseudarthrobacter chlorophenolicus (strain ATCC 700700 / DSM 12829 / CIP 107037 / JCM 12360 / KCTC 9906 / NCIMB 13794 / A6) (Arthrobacter chlorophenolicus), this protein is Proteasome subunit alpha.